The chain runs to 397 residues: Diphosphomevalonate decarboxylase (397 aa).

(R)-5-diphosphomevalonate is bound by residues 19-22, R74, 153-158, and T209; these read YWGK and SGSACR. A disordered region spans residues 378–397; the sequence is GPGPQDTKSSLIDPETGLPR.

Belongs to the diphosphomevalonate decarboxylase family. In terms of assembly, homodimer.

The catalysed reaction is (R)-5-diphosphomevalonate + ATP = isopentenyl diphosphate + ADP + phosphate + CO2. It functions in the pathway isoprenoid biosynthesis; isopentenyl diphosphate biosynthesis via mevalonate pathway; isopentenyl diphosphate from (R)-mevalonate: step 3/3. Diphosphomevalonate decarboxylase; part of the second module of ergosterol biosynthesis pathway that includes the middle steps of the pathway. The second module is carried out in the vacuole and involves the formation of farnesyl diphosphate, which is also an important intermediate in the biosynthesis of ubiquinone, dolichol, heme and prenylated proteins. Activity by the mevalonate kinase ERG12 first converts mevalonate into 5-phosphomevalonate. 5-phosphomevalonate is then further converted to 5-diphosphomevalonate by the phosphomevalonate kinase ERG8. The diphosphomevalonate decarboxylase MVD1/ERG19 then produces isopentenyl diphosphate. The isopentenyl-diphosphate delta-isomerase IDI1 then catalyzes the 1,3-allylic rearrangement of the homoallylic substrate isopentenyl (IPP) to its highly electrophilic allylic isomer, dimethylallyl diphosphate (DMAPP). Finally the farnesyl diphosphate synthase ERG20 catalyzes the sequential condensation of isopentenyl pyrophosphate with dimethylallyl pyrophosphate, and then with the resultant geranylpyrophosphate to the ultimate product farnesyl pyrophosphate. In Eremothecium gossypii (strain ATCC 10895 / CBS 109.51 / FGSC 9923 / NRRL Y-1056) (Yeast), this protein is Diphosphomevalonate decarboxylase.